Consider the following 567-residue polypeptide: Urease subunit alpha (567 aa).

Ni(2+) contacts are provided by His134, His136, and Lys217. Residue Lys217 is modified to N6-carboxylysine. His219 is a binding site for substrate. Ni(2+) contacts are provided by His246 and His272. The active-site Proton donor is His320. Asp360 contacts Ni(2+).

This sequence belongs to the metallo-dependent hydrolases superfamily. Urease alpha subunit family. Heterotrimer of UreA (gamma), UreB (beta) and UreC (alpha) subunits. Three heterotrimers associate to form the active enzyme. Ni cation is required as a cofactor. Post-translationally, carboxylation allows a single lysine to coordinate two nickel ions.

The protein localises to the cytoplasm. It catalyses the reaction urea + 2 H2O + H(+) = hydrogencarbonate + 2 NH4(+). It participates in nitrogen metabolism; urea degradation; CO(2) and NH(3) from urea (urease route): step 1/1. The protein is Urease subunit alpha of Polynucleobacter asymbioticus (strain DSM 18221 / CIP 109841 / QLW-P1DMWA-1) (Polynucleobacter necessarius subsp. asymbioticus).